Consider the following 183-residue polypeptide: Capsid protein (183 aa).

A disordered region spans residues 136–183; the sequence is NAPILSTLPETTVVRRRGRSPRRRTPSPRRRRSQSPRRRRSQSRESQC. Over residues 149 to 176 the composition is skewed to basic residues; sequence VRRRGRSPRRRTPSPRRRRSQSPRRRRS. Phosphoserine; by host occurs at positions 155, 162, and 170. The stretch at 155–161 is one 1; half-length repeat; it reads SPRRRTP. The 3 X 8 AA repeats of S-P-R-R-R-[PR]-S-Q stretch occupies residues 155–177; it reads SPRRRTPSPRRRRSQSPRRRRSQ. The Bipartite nuclear localization signal signature appears at 158–175; that stretch reads RRTPSPRRRRSQSPRRRR. 2 repeat units span residues 162–169 and 170–177. Residues 177–183 are RNA binding; it reads QSRESQC.

Belongs to the orthohepadnavirus core antigen family. As to quaternary structure, homodimerizes, then multimerizes. Interacts with cytosol exposed regions of viral L glycoprotein present in the reticulum-to-Golgi compartment. Interacts with human FLNB. Phosphorylated form interacts with host importin alpha; this interaction depends on the exposure of the NLS, which itself depends upon genome maturation and/or phosphorylation of the capsid protein. Interacts with host NUP153. Post-translationally, phosphorylated by host SRPK1, SRPK2, and maybe protein kinase C or GAPDH. Phosphorylation is critical for pregenomic RNA packaging. Protein kinase C phosphorylation is stimulated by HBx protein and may play a role in transport of the viral genome to the nucleus at the late step during the viral replication cycle.

It localises to the virion. The protein resides in the host cytoplasm. Functionally, self assembles to form an icosahedral capsid. Most capsids appear to be large particles with an icosahedral symmetry of T=4 and consist of 240 copies of capsid protein, though a fraction forms smaller T=3 particles consisting of 180 capsid proteins. Entering capsids are transported along microtubules to the nucleus. Phosphorylation of the capsid is thought to induce exposure of nuclear localization signal in the C-terminal portion of the capsid protein that allows binding to the nuclear pore complex via the importin (karyopherin-) alpha and beta. Capsids are imported in intact form through the nuclear pore into the nuclear basket, where it probably binds NUP153. Only capsids that contain the mature viral genome can release the viral DNA and capsid protein into the nucleoplasm. Immature capsids get stuck in the basket. Capsids encapsulate the pre-genomic RNA and the P protein. Pre-genomic RNA is reverse-transcribed into DNA while the capsid is still in the cytoplasm. The capsid can then either be directed to the nucleus, providing more genomes for transcription, or bud through the endoplasmic reticulum to provide new virions. The sequence is that of Capsid protein from Hepatitis B virus genotype B1 subtype adw (isolate Japan/pJDW233/1988) (HBV-B).